Here is a 64-residue protein sequence, read N- to C-terminus: MAEKKKSKLKITLVKSLIGRPETQRRTVRALGLTRMHQTVEQNDVPQIRGMVNRIRHLVKVEEA.

It belongs to the universal ribosomal protein uL30 family. Part of the 50S ribosomal subunit.

This Desulforudis audaxviator (strain MP104C) protein is Large ribosomal subunit protein uL30.